Consider the following 379-residue polypeptide: Chaperone protein DnaJ (379 aa).

The region spanning 5 to 69 is the J domain; that stretch reads EFYDRLGVSK…QKRAAYDQYG (65 aa). A CR-type zinc finger spans residues 135–217; sequence GAEKEVSYNR…CHGTGHEKKT (83 aa). Zn(2+)-binding residues include Cys-148, Cys-151, Cys-165, Cys-168, Cys-191, Cys-194, Cys-205, and Cys-208. CXXCXGXG motif repeat units follow at residues 148–155, 165–172, 191–198, and 205–212; these read CHTCSGSG, CQKCHGSG, CDVCQGSG, and CPTCHGTG.

Belongs to the DnaJ family. As to quaternary structure, homodimer. Zn(2+) serves as cofactor.

The protein localises to the cytoplasm. Functionally, participates actively in the response to hyperosmotic and heat shock by preventing the aggregation of stress-denatured proteins and by disaggregating proteins, also in an autonomous, DnaK-independent fashion. Unfolded proteins bind initially to DnaJ; upon interaction with the DnaJ-bound protein, DnaK hydrolyzes its bound ATP, resulting in the formation of a stable complex. GrpE releases ADP from DnaK; ATP binding to DnaK triggers the release of the substrate protein, thus completing the reaction cycle. Several rounds of ATP-dependent interactions between DnaJ, DnaK and GrpE are required for fully efficient folding. Also involved, together with DnaK and GrpE, in the DNA replication of plasmids through activation of initiation proteins. The polypeptide is Chaperone protein DnaJ (Streptococcus agalactiae serotype III (strain NEM316)).